Reading from the N-terminus, the 414-residue chain is 26S proteasome regulatory subunit 6B homolog (414 aa).

Residues 1–33 (MAATMVLDPKPSSTPPPTLPNPYTTDSQSTDSE) form a disordered region. A compositionally biased stretch (low complexity) spans 21–30 (NPYTTDSQST). Residues 55–81 (EYVKDELKNLKREQLRSQEEVKRIQSV) adopt a coiled-coil conformation. 202–209 (GPPGTGKT) serves as a coordination point for ATP.

Belongs to the AAA ATPase family.

The protein localises to the cytoplasm. The protein resides in the nucleus. Functionally, the 26S proteasome is involved in the ATP-dependent degradation of ubiquitinated proteins. The regulatory (or ATPase) complex confers ATP dependency and substrate specificity to the 26S complex. This chain is 26S proteasome regulatory subunit 6B homolog, found in Helianthus annuus (Common sunflower).